A 292-amino-acid chain; its full sequence is Elongation factor Ts (292 aa).

Residues 79-82 (TDFV) are involved in Mg(2+) ion dislocation from EF-Tu.

This sequence belongs to the EF-Ts family.

It localises to the cytoplasm. Its function is as follows. Associates with the EF-Tu.GDP complex and induces the exchange of GDP to GTP. It remains bound to the aminoacyl-tRNA.EF-Tu.GTP complex up to the GTP hydrolysis stage on the ribosome. The protein is Elongation factor Ts of Xanthomonas axonopodis pv. citri (strain 306).